Here is an 821-residue protein sequence, read N- to C-terminus: Calpain-3 (821 aa).

The segment at 7-37 is disordered; sequence ASVAPRTAAEPRSPGPVPHPAQSKATEAGGG. A Calpain catalytic domain is found at 74–417; it reads LYVDPEFPPD…FTKLEICNLT (344 aa). Active-site residues include C129, H334, and N358. The domain III stretch occupies residues 418 to 586; the sequence is ADALQSDKLQ…KRNLSEEVEN (169 aa). Positions 587–649 are linker; that stretch reads TISVDRPVKK…QPGSSDQESE (63 aa). The segment at 609-652 is disordered; the sequence is ANSNKELGVDQESEEGKGKTSPDKQKQSPQPQPGSSDQESEEQQ. The segment covering 622-634 has biased composition (basic and acidic residues); sequence EEGKGKTSPDKQK. A compositionally biased stretch (low complexity) spans 635 to 645; the sequence is QSPQPQPGSSD. EF-hand domains follow at residues 649–683, 692–725, 722–757, and 787–821; these read EEQQ…VVNK, FTLE…NKIK, NKIK…AGFH, and VRLE…TMYA. A domain IV region spans residues 650-821; sequence EQQQFRNIFK…LEWLQLTMYA (172 aa). A662, D665, E667, E672, D705, D707, S709, K711, E716, D735, D737, S739, T741, E746, D800, D802, D804, and I806 together coordinate Ca(2+).

This sequence belongs to the peptidase C2 family. Homodimer; via EF-hand domain 4. Interacts with TTN/titin. Interacts with CMYA5; this interaction, which results in CMYA5 proteolysis, may protect CAPN3 from autolysis. Interacts with SIMC1. Interacts with UTP25; the interaction is required for CAPN3 translocation to the nucleolus. In terms of tissue distribution, isoform I is skeletal muscle specific.

The protein resides in the cytoplasm. It is found in the nucleus. Its subcellular location is the nucleolus. It catalyses the reaction Broad endopeptidase activity.. With respect to regulation, activated by micromolar concentrations of calcium and inhibited by calpastatin. Functionally, calcium-regulated non-lysosomal thiol-protease. Proteolytically cleaves CTBP1 at 'His-409'. Mediates, with UTP25, the proteasome-independent degradation of p53/TP53. This chain is Calpain-3, found in Homo sapiens (Human).